A 115-amino-acid chain; its full sequence is GPPPAIGREVDCSNYKGKGSQIACPRLHQPICGTDHKTYSNECMFCALTLNKKFEVRKLQDTACDIECTEYSDMCTMDYRPLCGSDGKNYSNKCSFCNAVKKSRGTIFLAKHGEC.

Kazal-like domains lie at 6-66 and 67-115; these read IGRE…ACDI and ECTE…HGEC. 6 disulfides stabilise this stretch: Cys12–Cys46, Cys24–Cys43, Cys32–Cys64, Cys68–Cys97, Cys75–Cys94, and Cys83–Cys115.

It is found in the secreted. Functionally, this inhibitor is composed of two homologous actively inhibiting halves: one which inhibits trypsin, the other which inhibits elastase. The sequence is that of Double-headed protease inhibitor, submandibular gland from Canis lupus familiaris (Dog).